Reading from the N-terminus, the 377-residue chain is Dehydrogenase/reductase SDR family member 13 (377 aa).

An N-terminal signal peptide occupies residues 1–25; that stretch reads MEALLLGAGLLLGAYVLVYYNLVKA. The NAD(+) site is built by serine 46 and isoleucine 48. A substrate-binding site is contributed by serine 170. 3 residues coordinate NAD(+): tyrosine 197, lysine 201, and serine 232. Tyrosine 197 serves as the catalytic Proton acceptor. The disordered stretch occupies residues 309–377; sequence RLAGLGPGED…AKVEPEIQLS (69 aa). Positions 317-331 are enriched in acidic residues; sequence EDAEPDEDPQSEDSE. A compositionally biased stretch (low complexity) spans 347–357; that stretch reads SQPYPSPQSSP. Positions 368–377 are enriched in basic and acidic residues; it reads AKVEPEIQLS.

The protein belongs to the short-chain dehydrogenases/reductases (SDR) family.

It localises to the secreted. Its function is as follows. Putative oxidoreductase. The sequence is that of Dehydrogenase/reductase SDR family member 13 from Homo sapiens (Human).